A 280-amino-acid polypeptide reads, in one-letter code: UBX domain-containing protein 10 (280 aa).

Residues 41-94 (SAKGRTRPSLQKSQGVEVCAHHIPSPPPAIPYELPSSQKPGACAPKSPNQGASD) form a disordered region. S87 carries the phosphoserine modification. Positions 194-271 (DQEPRLLLAV…RIPHKSVLGI (78 aa)) constitute a UBX domain.

Belongs to the UBXN10 family. In terms of assembly, interacts with CLUAP1; the interaction is direct and mediates interaction with the intraflagellar transport complex B (IFT-B). Interacts with VCP; the interaction is direct.

It localises to the cell projection. Its subcellular location is the cilium. Its function is as follows. VCP/p97-binding protein required for ciliogenesis. Acts as a tethering factor that facilitates recruitment of VCP/p97 to the intraflagellar transport complex B (IFT-B) in cilia. UBX domain-containing proteins act as tethering factors for VCP/p97 and may specify substrate specificity of VCP/p97. The sequence is that of UBX domain-containing protein 10 from Homo sapiens (Human).